The primary structure comprises 172 residues: uncharacterized protein (172 aa).

Transmembrane regions (helical) follow at residues 1–21 (MLFINITFACILAIRFYSLSI), 41–61 (NSTLLSIAHVAFYFAAIIEAN), 72–92 (QIGLAILIFAIAMLFYVIYEL), and 136–156 (FCQAKYTALVGLPIYLLILAV).

It is found in the cell membrane. This is an uncharacterized protein from Haemophilus influenzae (strain ATCC 51907 / DSM 11121 / KW20 / Rd).